A 280-amino-acid chain; its full sequence is uncharacterized protein (280 aa).

This is an uncharacterized protein from Aedes vexans (Inland floodwater mosquito).